The following is a 240-amino-acid chain: UDP-2,3-diacylglucosamine hydrolase (240 aa).

Positions 7, 9, 40, 78, and 113 each coordinate Mn(2+). 78–79 contacts substrate; it reads NR. Substrate is bound by residues D121, S159, T163, K166, and H194. Positions 194 and 196 each coordinate Mn(2+).

This sequence belongs to the LpxH family. Requires Mn(2+) as cofactor.

It is found in the cell inner membrane. The catalysed reaction is UDP-2-N,3-O-bis[(3R)-3-hydroxytetradecanoyl]-alpha-D-glucosamine + H2O = 2-N,3-O-bis[(3R)-3-hydroxytetradecanoyl]-alpha-D-glucosaminyl 1-phosphate + UMP + 2 H(+). The protein operates within glycolipid biosynthesis; lipid IV(A) biosynthesis; lipid IV(A) from (3R)-3-hydroxytetradecanoyl-[acyl-carrier-protein] and UDP-N-acetyl-alpha-D-glucosamine: step 4/6. In terms of biological role, hydrolyzes the pyrophosphate bond of UDP-2,3-diacylglucosamine to yield 2,3-diacylglucosamine 1-phosphate (lipid X) and UMP by catalyzing the attack of water at the alpha-P atom. Involved in the biosynthesis of lipid A, a phosphorylated glycolipid that anchors the lipopolysaccharide to the outer membrane of the cell. The protein is UDP-2,3-diacylglucosamine hydrolase of Stutzerimonas stutzeri (strain A1501) (Pseudomonas stutzeri).